Reading from the N-terminus, the 275-residue chain is Large ribosomal subunit protein uL2 (275 aa).

The segment at 216–275 (GIRPQTRGSAMNPIDHPHGGGEGKTNSGRHPVTPWGMPTKGYKTRKKKASDKLIISKRKK) is disordered. Residues 257 to 275 (YKTRKKKASDKLIISKRKK) show a composition bias toward basic residues.

The protein belongs to the universal ribosomal protein uL2 family. Part of the 50S ribosomal subunit. Forms a bridge to the 30S subunit in the 70S ribosome.

One of the primary rRNA binding proteins. Required for association of the 30S and 50S subunits to form the 70S ribosome, for tRNA binding and peptide bond formation. It has been suggested to have peptidyltransferase activity; this is somewhat controversial. Makes several contacts with the 16S rRNA in the 70S ribosome. This is Large ribosomal subunit protein uL2 from Aliarcobacter butzleri (strain RM4018) (Arcobacter butzleri).